We begin with the raw amino-acid sequence, 163 residues long: Nucleotide-binding protein YajQ (163 aa).

The protein belongs to the YajQ family.

Nucleotide-binding protein. The protein is Nucleotide-binding protein YajQ of Escherichia coli O81 (strain ED1a).